The primary structure comprises 1235 residues: ATP-dependent DNA helicase mph1 (1235 aa).

Disordered stretches follow at residues 20–78 and 96–148; these read LTQA…YRIH and DEMP…VHSP. The span at 61–72 shows a compositional bias: basic and acidic residues; sequence SRSDNDEADEKK. Residues 137-148 show a composition bias toward polar residues; the sequence is AKTQKQNIVHSP. Residues 272-440 enclose the Helicase ATP-binding domain; the sequence is IVHKGLFNNL…EVIDNLEIAE (169 aa). 285 to 292 is a binding site for ATP; the sequence is LPTGLGKT. A DEAH box motif is present at residues 388–391; sequence DEAH. Positions 608 to 784 constitute a Helicase C-terminal domain; sequence KLTYLCDTVL…GSRFTFRHDL (177 aa). 3 disordered regions span residues 808–827, 944–1117, and 1144–1235; these read NTQD…RKKL, SRLQ…PPLM, and TGAK…DSDE. Positions 947 to 958 are enriched in basic and acidic residues; it reads QRPEDRDNKPYG. Residues 1015 to 1027 show a composition bias toward basic residues; the sequence is VAPKKAKPRRGRA. Over residues 1065–1074 the composition is skewed to basic and acidic residues; that stretch reads PGERVDRTSD. Positions 1075 to 1085 are enriched in acidic residues; the sequence is MEELEADDDSD. 2 stretches are compositionally biased toward polar residues: residues 1095 to 1114 and 1146 to 1159; these read PTQT…SSSP and AKNS…MTQE. Over residues 1160 to 1170 the composition is skewed to low complexity; sequence SSDGGDSMDSD. Over residues 1194 to 1209 the composition is skewed to polar residues; it reads PSSSVFSSGQKATPNM.

The protein belongs to the DEAD box helicase family. DEAH subfamily. FANCM sub-subfamily. As to quaternary structure, interacts with the MHF histone-fold complex to form the FANCM-MHF complex.

It localises to the nucleus. The catalysed reaction is ATP + H2O = ADP + phosphate + H(+). ATP-dependent DNA helicase involved in DNA damage repair by homologous recombination and in genome maintenance. Capable of unwinding D-loops. Plays a role in limiting crossover recombinants during mitotic DNA double-strand break (DSB) repair. Component of a FANCM-MHF complex which promotes gene conversion at blocked replication forks, probably by reversal of the stalled fork. In Sclerotinia sclerotiorum (strain ATCC 18683 / 1980 / Ss-1) (White mold), this protein is ATP-dependent DNA helicase mph1.